The primary structure comprises 371 residues: Pyruvate dehydrogenase E1 component subunit alpha (371 aa).

Heterodimer of an alpha and a beta chain. The cofactor is thiamine diphosphate.

It carries out the reaction N(6)-[(R)-lipoyl]-L-lysyl-[protein] + pyruvate + H(+) = N(6)-[(R)-S(8)-acetyldihydrolipoyl]-L-lysyl-[protein] + CO2. Its activity is regulated as follows. Activity of the E1 module is inhibited by the pyruvate dehydrogenase inhibitor PdhI. In terms of biological role, the pyruvate dehydrogenase complex catalyzes the overall conversion of pyruvate to acetyl-CoA and CO(2). It contains multiple copies of three enzymatic components: pyruvate dehydrogenase (E1), dihydrolipoamide acetyltransferase (E2) and lipoamide dehydrogenase (E3). The B.subtilis PDH complex also possesses branched-chain 2-oxoacid dehydrogenase (BCDH) activity. The chain is Pyruvate dehydrogenase E1 component subunit alpha from Bacillus subtilis (strain 168).